The sequence spans 296 residues: Sulfotransferase 1C2 (296 aa).

49 to 54 contributes to the 3'-phosphoadenylyl sulfate binding site; it reads KSGTTW. 107 to 109 contacts substrate; the sequence is RTH. Residue histidine 109 is the Proton acceptor of the active site. Residues arginine 131, serine 139, tyrosine 194, and 228–233 each bind 3'-phosphoadenylyl sulfate; that span reads TSFEKM. The residue at position 139 (serine 139) is a Phosphoserine. Position 254 is a phosphoserine (serine 254). 256-260 contributes to the 3'-phosphoadenylyl sulfate binding site; sequence FMRKG.

Belongs to the sulfotransferase 1 family. As to expression, highly expressed in kidney and at lower levels in stomach and liver. More specifically found in the epithelia of proximal tubules of the kidney, of the bile duct, of the gastric mucosa, and in hepatocytes.

The protein resides in the cytoplasm. It is found in the lysosome. It localises to the mitochondrion. It catalyses the reaction a phenol + 3'-phosphoadenylyl sulfate = an aryl sulfate + adenosine 3',5'-bisphosphate + H(+). The catalysed reaction is cholesterol + 3'-phosphoadenylyl sulfate = cholesterol sulfate + adenosine 3',5'-bisphosphate + H(+). Sulfotransferase that utilizes 3'-phospho-5'-adenylyl sulfate (PAPS) to catalyze the sulfate conjugation of phenolic compounds. Does not transfer sulfate to steroids, dopamine, acetaminophen, or alpha-naphthol. Except in mitochondria, where it can add sulfate to cholesterol producing cholesterol sulfate, which alters mitochondrial membrane organization, and impacts protein complex mobility increasing state-III respiration, thereby modulating mitochondrial respiration. Catalyzes the sulfation of the carcinogenic N-hydroxy-2-acetylaminofluorene leading to highly reactive intermediates capable of forming DNA adducts, potentially resulting in mutagenesis. The polypeptide is Sulfotransferase 1C2 (Sult1c2) (Rattus norvegicus (Rat)).